The primary structure comprises 379 residues: UDP-4-amino-4-deoxy-L-arabinose--oxoglutarate aminotransferase (379 aa).

Position 182 is an N6-(pyridoxal phosphate)lysine (Lys-182).

This sequence belongs to the DegT/DnrJ/EryC1 family. ArnB subfamily. Homodimer. Requires pyridoxal 5'-phosphate as cofactor.

It carries out the reaction UDP-4-amino-4-deoxy-beta-L-arabinose + 2-oxoglutarate = UDP-beta-L-threo-pentopyranos-4-ulose + L-glutamate. The protein operates within nucleotide-sugar biosynthesis; UDP-4-deoxy-4-formamido-beta-L-arabinose biosynthesis; UDP-4-deoxy-4-formamido-beta-L-arabinose from UDP-alpha-D-glucuronate: step 2/3. It participates in bacterial outer membrane biogenesis; lipopolysaccharide biosynthesis. In terms of biological role, catalyzes the conversion of UDP-4-keto-arabinose (UDP-Ara4O) to UDP-4-amino-4-deoxy-L-arabinose (UDP-L-Ara4N). The modified arabinose is attached to lipid A and is required for resistance to polymyxin and cationic antimicrobial peptides. This chain is UDP-4-amino-4-deoxy-L-arabinose--oxoglutarate aminotransferase, found in Shigella boydii serotype 4 (strain Sb227).